A 332-amino-acid polypeptide reads, in one-letter code: uncharacterized protein (332 aa).

A signal peptide spans 1 to 26 (MSSLGKLLKLTLLGILLSFSCKFVFG).

It localises to the endoplasmic reticulum. This is an uncharacterized protein from Schizosaccharomyces pombe (strain 972 / ATCC 24843) (Fission yeast).